Consider the following 852-residue polypeptide: Disease resistance RPP13-like protein 4 (852 aa).

The stretch at 17 to 68 (LEEKGRTVSDYRKQLEDLQSELKYMQSFLKDAERQKRTNETLRTLVADLREL) forms a coiled coil. ADP is bound by residues Arg149, Val161, 189–196 (GMGGLGKT), Arg297, and Lys363. Residues 164 to 410 (EGDKRKIKEW…MSSLQLSYDE (247 aa)) form the NB-ARC domain. 6 LRR repeats span residues 558–581 (CKYLRVLDISKSIFDAPLSEILDE), 585–609 (LQHLACLSLSNTHPLIQFPRSMEDL), 633–657 (FKKLLVLDMTNCGSLECFPKGIGSL), 683–706 (LTNLRKLGLSLTRGDQIEEEELDS), 763–786 (LPMLRYMSICSGNLVKMQEPFWGN), and 798–824 (LSSLSDLDMDWEVLQQSMPYLRTVTAN).

It belongs to the disease resistance NB-LRR family. RPP13 subfamily. Interacts with ZED1/ZRK5. Component of a stable high-order oligomeric complex made of RKS1 and RPP13L4/ZAR1 which recruits ZED1-related kinases (e.g. uridylylated PBL2 and acetylated ZED1/ZRK5) in the presence of ATP and pathogenic bacteria type III secreted effector (T3SE) proteins (e.g. Pseudomonas syringae HopZ1a and HopF2a and Xanthomonas campestris pv. campestris (Xcc) XopAC/AvrAC) to form a wheel-like pentameric resistosome; this complex triggers immunity toward pathogenic bacteria (e.g. X.campestris and P.syringae), especially in vascular tissues. Interacts with RKS1, ZED1/ZRK5, ZRK3, ZRK6 and ZRK15.

It localises to the cell membrane. It is found in the nucleus. Exhibits autoinhibition activity. Its function is as follows. CC-NB-LRR receptor-like protein required for recognition of pathogenic bacteria type III effectors (T3E) such as Pseudomonas syringae HopZ1a and HopF2a and Xanthomonas campestris pv. campestris (Xcc) XopAC/AvrAC; this recognition requires ZED1-related kinases (e.g. PBL2, ZRK3 and ZED1/ZRK5). Confers allele-specific recognition and virulence attenuation of HopZ1a. Immunity mediated by RPP13L4/ZAR1 is independent of several genes required by other resistance protein signaling pathways such as NDR1 and RAR1. Together with ZED1/ZRK5, involved in the regulation of the ambient temperature-sensitive intersection of growth and immune response in the absence of pathogens. The polypeptide is Disease resistance RPP13-like protein 4 (RPP13L4) (Arabidopsis thaliana (Mouse-ear cress)).